A 102-amino-acid chain; its full sequence is NADH-quinone oxidoreductase subunit K (102 aa).

The next 3 helical transmembrane spans lie at 6 to 26 (ATHFLLLSAALFIIGMVGVLT), 31 to 51 (LVIFMCIELMLNAVNVSLIGF), and 62 to 82 (VFALFVIAIAAAEAVVGLGIV).

It belongs to the complex I subunit 4L family. As to quaternary structure, NDH-1 is composed of 14 different subunits. Subunits NuoA, H, J, K, L, M, N constitute the membrane sector of the complex.

The protein resides in the cell membrane. The catalysed reaction is a quinone + NADH + 5 H(+)(in) = a quinol + NAD(+) + 4 H(+)(out). In terms of biological role, NDH-1 shuttles electrons from NADH, via FMN and iron-sulfur (Fe-S) centers, to quinones in the respiratory chain. The immediate electron acceptor for the enzyme in this species is believed to be ubiquinone. Couples the redox reaction to proton translocation (for every two electrons transferred, four hydrogen ions are translocated across the cytoplasmic membrane), and thus conserves the redox energy in a proton gradient. The sequence is that of NADH-quinone oxidoreductase subunit K from Thermomicrobium roseum (strain ATCC 27502 / DSM 5159 / P-2).